The following is a 534-amino-acid chain: Probable DNA polymerase epsilon subunit 2 (534 aa).

This sequence belongs to the DNA polymerase epsilon subunit B family. Consists of four subunits.

Its subcellular location is the nucleus. In terms of biological role, accessory component of the DNA polymerase epsilon complex. Participates in DNA repair and in chromosomal DNA replication. In Caenorhabditis elegans, this protein is Probable DNA polymerase epsilon subunit 2 (pole-2).